Reading from the N-terminus, the 336-residue chain is N-lysine methyltransferase KMT5A (336 aa).

A disordered region spans residues 1-112 (MGRGKKMSKP…KPSEQRETEC (112 aa)). The span at 67–93 (SVAHHESKCPGKPLTETRKKAEVEKKR) shows a compositional bias: basic and acidic residues. The region spanning 200–321 (EGMKMDMITG…VGEELLYDYG (122 aa)) is the SET domain. S-adenosyl-L-methionine is bound by residues 210 to 212 (KGR), tyrosine 255, and 282 to 283 (NH).

The protein belongs to the class V-like SAM-binding methyltransferase superfamily. Histone-lysine methyltransferase family. PR/SET subfamily.

The protein resides in the nucleus. It localises to the chromosome. It catalyses the reaction L-lysyl(20)-[histone H4] + S-adenosyl-L-methionine = N(6)-methyl-L-lysyl(20)-[histone H4] + S-adenosyl-L-homocysteine + H(+). The catalysed reaction is L-lysyl-[protein] + S-adenosyl-L-methionine = N(6)-methyl-L-lysyl-[protein] + S-adenosyl-L-homocysteine + H(+). Protein-lysine N-methyltransferase that monomethylates both histones and non-histone proteins. Specifically monomethylates 'Lys-20' of histone H4 (H4K20me1). H4K20me1 is enriched during mitosis and represents a specific tag for epigenetic transcriptional repression. Mainly functions in euchromatin regions, thereby playing a central role in the silencing of euchromatic genes. Required for cell proliferation, probably by contributing to the maintenance of proper higher-order structure of DNA during mitosis. Involved in chromosome condensation and proper cytokinesis. Nucleosomes are preferred as substrate compared to free histones. Mediates monomethylation of p53/TP53 at 'Lys-382', leading to repress p53/TP53-target genes. Plays a negative role in TGF-beta response regulation and a positive role in cell migration. In Xenopus tropicalis (Western clawed frog), this protein is N-lysine methyltransferase KMT5A.